The sequence spans 296 residues: 4-hydroxy-tetrahydrodipicolinate synthase (296 aa).

A pyruvate-binding site is contributed by Thr-49. Tyr-137 (proton donor/acceptor) is an active-site residue. The Schiff-base intermediate with substrate role is filled by Lys-165. Ile-207 is a pyruvate binding site.

This sequence belongs to the DapA family. In terms of assembly, homotetramer; dimer of dimers.

The protein localises to the cytoplasm. It catalyses the reaction L-aspartate 4-semialdehyde + pyruvate = (2S,4S)-4-hydroxy-2,3,4,5-tetrahydrodipicolinate + H2O + H(+). It functions in the pathway amino-acid biosynthesis; L-lysine biosynthesis via DAP pathway; (S)-tetrahydrodipicolinate from L-aspartate: step 3/4. Its function is as follows. Catalyzes the condensation of (S)-aspartate-beta-semialdehyde [(S)-ASA] and pyruvate to 4-hydroxy-tetrahydrodipicolinate (HTPA). The protein is 4-hydroxy-tetrahydrodipicolinate synthase of Bradyrhizobium diazoefficiens (strain JCM 10833 / BCRC 13528 / IAM 13628 / NBRC 14792 / USDA 110).